The following is a 527-amino-acid chain: Putative GTP-binding protein 6 (527 aa).

The Hflx-type G domain occupies 306–470; sequence PIISILGYTN…QVETAVMKST (165 aa). Residues 312–319, 338–342, 360–363, 429–432, and 448–450 each bind GTP; these read GYTNSGKT, FATLD, DTIG, NKID, and SAL. Mg(2+)-binding residues include threonine 319 and threonine 340.

This sequence belongs to the TRAFAC class OBG-HflX-like GTPase superfamily. HflX GTPase family. It depends on Mg(2+) as a cofactor.

In Xenopus laevis (African clawed frog), this protein is Putative GTP-binding protein 6 (gtpbp6).